An 885-amino-acid chain; its full sequence is Ankyrin repeat and SAM domain-containing protein 6 (885 aa).

ANK repeat units follow at residues 8-37 (PGLQ…EPVA), 68-97 (AGNS…SVNS), 101-130 (YGWS…DVNA), 134-163 (LGAS…TVDH), 181-210 (LGIT…DPNH), 215-244 (VGWS…NPDH), 282-312 (KRRP…HVNL), 316-345 (DGAT…DMNK), 350-379 (HGWT…DVTL), and 383-414 (NGYT…QVNK). The residue at position 129 (N129) is a 3-hydroxyasparagine. Disordered stretches follow at residues 415-439 (DRGG…SIPM), 491-522 (MRAP…PRRE), 563-775 (SSDR…ITDE), and 855-885 (FESS…SSRR). Positions 608–640 (PSISRSPTSPASSGNFNHSPHSSGGASGVGSMS) are enriched in low complexity. Phosphoserine is present on S650. The span at 650-662 (SGGSVDSVLSQIA) shows a compositional bias: polar residues. 2 stretches are compositionally biased toward low complexity: residues 689-713 (GSSP…TSSS) and 722-739 (PPSG…TLTP). Residues S734 and S742 each carry the phosphoserine modification. Positions 750–770 (SSVSSSSSHRQSKSSGGSSSG) are enriched in low complexity. Residues 773-836 (TDEDELTGIL…LAAISELNAG (64 aa)) form the SAM domain. Residues 855–865 (FESSASNTRAP) show a composition bias toward polar residues. The segment covering 876–885 (RPEETVSSRR) has biased composition (basic and acidic residues).

Homooligomer. Interacts with NEK8. Central component of a complex containing at least ANKS6, INVS, NEK8 and NPHP3. ANKS6 may organize complex assembly by linking INVS and NPHP3 to NEK8 and INVS may target the complex to the proximal ciliary axoneme. Interacts (via SAM domain) with BICC1 (via KH domains) in an RNA-dependent manner. Interacts (via SAM domain) with ANKS3 (via SAM domain). In terms of processing, hydroxylated at Asn-129, most probably by HIF1AN. This hydroxylation results in decreased NEK8-binding. In terms of tissue distribution, widely expressed with moderate level in brain, skeletal muscle and testis. Expressed in renal tubules.

The protein resides in the cell projection. The protein localises to the cilium. It localises to the cytoplasm. In terms of biological role, required for renal function. The chain is Ankyrin repeat and SAM domain-containing protein 6 (Anks6) from Rattus norvegicus (Rat).